A 183-amino-acid chain; its full sequence is Protein Syd (183 aa).

This sequence belongs to the Syd family.

The protein resides in the cell inner membrane. In terms of biological role, interacts with the SecY protein in vivo. May bind preferentially to an uncomplexed state of SecY, thus functioning either as a chelating agent for excess SecY in the cell or as a regulatory factor that negatively controls the translocase function. The polypeptide is Protein Syd (Idiomarina loihiensis (strain ATCC BAA-735 / DSM 15497 / L2-TR)).